Here is a 475-residue protein sequence, read N- to C-terminus: Ribulose bisphosphate carboxylase large chain (475 aa).

Positions 1 to 2 are excised as a propeptide; the sequence is MS. Pro3 is subject to N-acetylproline. Lys14 carries the post-translational modification N6,N6,N6-trimethyllysine. Asn123 and Thr173 together coordinate substrate. Lys175 acts as the Proton acceptor in catalysis. A substrate-binding site is contributed by Lys177. Mg(2+) contacts are provided by Lys201, Asp203, and Glu204. An N6-carboxylysine modification is found at Lys201. The Proton acceptor role is filled by His294. 3 residues coordinate substrate: Arg295, His327, and Ser379.

The protein belongs to the RuBisCO large chain family. Type I subfamily. Heterohexadecamer of 8 large chains and 8 small chains; disulfide-linked. The disulfide link is formed within the large subunit homodimers. It depends on Mg(2+) as a cofactor. Post-translationally, the disulfide bond which can form in the large chain dimeric partners within the hexadecamer appears to be associated with oxidative stress and protein turnover.

The protein localises to the plastid. It localises to the chloroplast. It catalyses the reaction 2 (2R)-3-phosphoglycerate + 2 H(+) = D-ribulose 1,5-bisphosphate + CO2 + H2O. It carries out the reaction D-ribulose 1,5-bisphosphate + O2 = 2-phosphoglycolate + (2R)-3-phosphoglycerate + 2 H(+). In terms of biological role, ruBisCO catalyzes two reactions: the carboxylation of D-ribulose 1,5-bisphosphate, the primary event in carbon dioxide fixation, as well as the oxidative fragmentation of the pentose substrate in the photorespiration process. Both reactions occur simultaneously and in competition at the same active site. This is Ribulose bisphosphate carboxylase large chain from Psilotum nudum (Whisk fern).